Consider the following 285-residue polypeptide: tRNA pseudouridine synthase A (285 aa).

Asp-64 acts as the Nucleophile in catalysis. Tyr-125 is a binding site for substrate.

Belongs to the tRNA pseudouridine synthase TruA family. Homodimer.

The enzyme catalyses uridine(38/39/40) in tRNA = pseudouridine(38/39/40) in tRNA. In terms of biological role, formation of pseudouridine at positions 38, 39 and 40 in the anticodon stem and loop of transfer RNAs. This is tRNA pseudouridine synthase A from Streptomyces avermitilis (strain ATCC 31267 / DSM 46492 / JCM 5070 / NBRC 14893 / NCIMB 12804 / NRRL 8165 / MA-4680).